Here is a 431-residue protein sequence, read N- to C-terminus: uncharacterized protein (431 aa).

Disordered regions lie at residues 1–37 and 102–132; these read MFWR…KLTP and PPPL…RRVA. The span at 22–32 shows a compositional bias: basic and acidic residues; it reads GDFRRSSDPRL. Residues 106–121 show a composition bias toward low complexity; that stretch reads LSAGASRESAPRQPGP. Basic and acidic residues predominate over residues 122 to 132; sequence GERERPRRRVA.

It is found in the cytoplasm. This is an uncharacterized protein from Homo sapiens (Human).